Here is a 184-residue protein sequence, read N- to C-terminus: Probable cobalt-precorrin-6B C(15)-methyltransferase (decarboxylating) (184 aa).

Residues Thr-12, 36-40, Asp-59, and Ala-87 contribute to the S-adenosyl-L-methionine site; that span reads GCGTG.

Belongs to the methyltransferase superfamily. Archaeal-type CbiT family.

It carries out the reaction Co-precorrin-6B + S-adenosyl-L-methionine = Co-precorrin-7 + S-adenosyl-L-homocysteine + CO2. It participates in cofactor biosynthesis; adenosylcobalamin biosynthesis; cob(II)yrinate a,c-diamide from sirohydrochlorin (anaerobic route): step 8/10. Functionally, catalyzes the methylation of C-15 in cobalt-precorrin-6B followed by the decarboxylation of C-12 to form cobalt-precorrin-7. This is Probable cobalt-precorrin-6B C(15)-methyltransferase (decarboxylating) from Methanosarcina mazei (strain ATCC BAA-159 / DSM 3647 / Goe1 / Go1 / JCM 11833 / OCM 88) (Methanosarcina frisia).